An 803-amino-acid chain; its full sequence is Volume-regulated anion channel subunit LRRC8C (803 aa).

Residues 1–22 (MIPVTEFRQFSEQQPAFRVLKP) lie on the Cytoplasmic side of the membrane. Residues 23 to 43 (WWDVFTDYLSVAMLMIGVFGC) form a helical membrane-spanning segment. Topologically, residues 44–125 (TLQVMQDKII…YERALHWYAK (82 aa)) are extracellular. Intrachain disulfides connect Cys-54/Cys-308 and Cys-115/Cys-293. N-linked (GlcNAc...) asparagine glycans are attached at residues Asn-64 and Asn-70. A helical transmembrane segment spans residues 126-146 (YFPYLVLIHTLVFMLCSNFWF). Topologically, residues 147–266 (KFPGSSSKIE…ILYAMYVRQT (120 aa)) are cytoplasmic. Residues 177–211 (EVSGEDSEEKDNRKNNMNRSNTIQSGPEGSLVKSQ) form a disordered region. A compositionally biased stretch (polar residues) spans 191 to 211 (NNMNRSNTIQSGPEGSLVKSQ). Phosphoserine is present on residues Ser-212 and Ser-215. A helical membrane pass occupies residues 267–287 (VLKVIKFLIIIAYNSALVSKV). Residues 288 to 320 (QFTVDCNVDIQDMTGYKNFSCNHTMAHLFSKLS) lie on the Extracellular side of the membrane. A helical membrane pass occupies residues 321 to 341 (FCYLCFVSIYGLTCLYTLYWL). Over 342–803 (FYRSLREYSF…SDVREQMKAD (462 aa)) the chain is Cytoplasmic. 17 LRR repeats span residues 397 to 420 (ENKL…KLQT), 421 to 443 (NAHN…VFEI), 446 to 466 (LQSL…IAQL), 467 to 488 (DNLQ…ALSF), 490 to 513 (KENL…MYGL), 515 to 537 (NLEE…TLES), 541 to 563 (LKSL…VVDV), 565 to 587 (SHLQ…NLKK), 588 to 611 (MTNL…VFSL), 613 to 635 (SLQE…SFQH), 637 to 659 (RKLT…IKKL), 660 to 682 (TSLE…LFLC), 684 to 705 (KIRY…IGVL), 706 to 728 (QSLQ…LYFC), 730 to 751 (KLKT…IGNL), 752 to 774 (LFLS…LGDC), and 776 to 799 (ALKR…VREQ).

The protein belongs to the LRRC8 family. Heterohexamer; oligomerizes with other LRRC8 proteins (LRRC8A, LRRC8B, LRRC8D and/or LRRC8E) to form a heterohexamer. Homoheptamer; inactive, likely because it is not targeted to the plasma membrane in the absence of LRRC8A. In vivo, the subunit composition may depend primarily on expression levels, and heterooligomeric channels containing various proportions of the different LRRC8 proteins may coexist.

The protein resides in the cell membrane. The protein localises to the endoplasmic reticulum membrane. It carries out the reaction chloride(in) = chloride(out). The enzyme catalyses iodide(out) = iodide(in). The catalysed reaction is taurine(out) = taurine(in). It catalyses the reaction 2',3'-cGAMP(out) = 2',3'-cGAMP(in). Non-essential component of the volume-regulated anion channel (VRAC, also named VSOAC channel), an anion channel required to maintain a constant cell volume in response to extracellular or intracellular osmotic changes. The VRAC channel conducts iodide better than chloride and can also conduct organic osmolytes like taurine. Plays a redundant role in the efflux of amino acids, such as aspartate and glutamate, in response to osmotic stress. The VRAC channel also mediates transport of immunoreactive cyclic dinucleotide GMP-AMP (2'-3'-cGAMP), an immune messenger produced in response to DNA virus in the cytosol. Channel activity requires LRRC8A plus at least one other family member (LRRC8B, LRRC8C, LRRC8D or LRRC8E); channel characteristics depend on the precise subunit composition. The sequence is that of Volume-regulated anion channel subunit LRRC8C from Rattus norvegicus (Rat).